The chain runs to 645 residues: MHKELYPVNSEVAKKAWIDEAKYKAMYERSIQDNEAFWAEQAERLDWIKKWDKVKEVSFKKPVSIKWYLGGKMNVSYNCVDRHLKTRGDKTALLWEADNPSTPSRKITYKELHLEVCRFANVLKKMGVKKGDVVTIYMPMIPDTAVAMLACARIGAVHSVVFAGFSPDSISDRILDGQCRFVITGDAGFRGSKVVALKENIDKALVKTPDVQKVLVVKYAGTTVDMKPGRDLWYHEEVKTVSDQCEPEPMDAEDPLFILYTSGSTGKPKGVMHTTGGYLVYASMTHQYVFDYHEDDIYWCSADVGWVTGHSYIVYGPLANGATSLFFEGVPNYPTPSRFWEVVDKHKVTIFYTSPTAIRSLMREGDAAVKTTSRKTLRLLGSVGEPINPEAWAWYHDVVGEGRCPVVDTWWQTETGGILITPLPGAIAQKPGSATLPFFGVQPKLLTNEGQEIHGPGEGVLVIADSWPGQMRTVYRNHERFEDTYFSNYPGYYFTGDGCRRDQDGYYWITGRVDDVINVSGHRLGTAEIESALVAHHKVAEAAVVGYPHDIKGQGIYAFVTLKSGETASEELRKELIQTVRKEIGPIATPDLIQWAPRLPKTRSGKIMRRILRKIAENHPDQLGDTTTLSEPAVVQELVDNRMNR.

Residues 190–193, Thr-308, and Asn-332 each bind CoA; that span reads RGSK. ATP is bound by residues 384-386, 408-413, Asp-497, and Arg-512; these read GEP and DTWWQT. Ser-520 is a binding site for CoA. Arg-523 serves as a coordination point for ATP. 3 residues coordinate Mg(2+): Val-534, His-536, and Val-539. Arg-581 serves as a coordination point for CoA. Lys-606 carries the post-translational modification N6-acetyllysine.

Belongs to the ATP-dependent AMP-binding enzyme family. Mg(2+) is required as a cofactor. Acetylated. Deacetylation by the SIR2-homolog deacetylase activates the enzyme.

It carries out the reaction acetate + ATP + CoA = acetyl-CoA + AMP + diphosphate. Its function is as follows. Catalyzes the conversion of acetate into acetyl-CoA (AcCoA), an essential intermediate at the junction of anabolic and catabolic pathways. AcsA undergoes a two-step reaction. In the first half reaction, AcsA combines acetate with ATP to form acetyl-adenylate (AcAMP) intermediate. In the second half reaction, it can then transfer the acetyl group from AcAMP to the sulfhydryl group of CoA, forming the product AcCoA. The sequence is that of Acetyl-coenzyme A synthetase from Bdellovibrio bacteriovorus (strain ATCC 15356 / DSM 50701 / NCIMB 9529 / HD100).